Consider the following 118-residue polypeptide: NADH-ubiquinone oxidoreductase chain 3 (118 aa).

A run of 3 helical transmembrane segments spans residues 9-29, 62-82, and 87-107; these read IYLV…FLFA, LVSI…PWAV, and IDLF…IGSL.

The protein belongs to the complex I subunit 3 family.

Its subcellular location is the mitochondrion membrane. The enzyme catalyses a ubiquinone + NADH + 5 H(+)(in) = a ubiquinol + NAD(+) + 4 H(+)(out). Its function is as follows. Core subunit of the mitochondrial membrane respiratory chain NADH dehydrogenase (Complex I) that is believed to belong to the minimal assembly required for catalysis. Complex I functions in the transfer of electrons from NADH to the respiratory chain. The immediate electron acceptor for the enzyme is believed to be ubiquinone. This chain is NADH-ubiquinone oxidoreductase chain 3 (ND3), found in Zea mays (Maize).